The primary structure comprises 315 residues: Homoserine kinase (315 aa).

Residue 97-107 (PPARGLGSSAT) participates in ATP binding.

This sequence belongs to the GHMP kinase family. Homoserine kinase subfamily.

Its subcellular location is the cytoplasm. It carries out the reaction L-homoserine + ATP = O-phospho-L-homoserine + ADP + H(+). The protein operates within amino-acid biosynthesis; L-threonine biosynthesis; L-threonine from L-aspartate: step 4/5. Functionally, catalyzes the ATP-dependent phosphorylation of L-homoserine to L-homoserine phosphate. The chain is Homoserine kinase from Prochlorococcus marinus subsp. pastoris (strain CCMP1986 / NIES-2087 / MED4).